Consider the following 304-residue polypeptide: Deoxyribonuclease-1-like 1 (304 aa).

The N-terminal stretch at 1-24 (MPYMAMHGLTVALLLIFLAGGTEA) is a signal peptide. Asn-92 carries N-linked (GlcNAc...) asparagine glycosylation. Glu-103 is a catalytic residue. Asn-123 is a glycosylation site (N-linked (GlcNAc...) asparagine). His-154 is an active-site residue. Cys-193 and Cys-230 are disulfide-bonded. N-linked (GlcNAc...) asparagine glycosylation occurs at Asn-229.

The protein belongs to the DNase I family.

It is found in the endoplasmic reticulum. The polypeptide is Deoxyribonuclease-1-like 1 (DNASE1L1) (Cricetulus griseus (Chinese hamster)).